Here is a 125-residue protein sequence, read N- to C-terminus: uncharacterized protein (125 aa).

Positions 45-110 constitute a Cupin type-2 domain; it reads IVPVGSKTLL…IGNVPLKILC (66 aa).

This is an uncharacterized protein from Methanocaldococcus jannaschii (strain ATCC 43067 / DSM 2661 / JAL-1 / JCM 10045 / NBRC 100440) (Methanococcus jannaschii).